The sequence spans 93 residues: DNA-directed RNA polymerase subunit omega (93 aa).

It belongs to the RNA polymerase subunit omega family. As to quaternary structure, the RNAP catalytic core consists of 2 alpha, 1 beta, 1 beta' and 1 omega subunit. When a sigma factor is associated with the core the holoenzyme is formed, which can initiate transcription.

It catalyses the reaction RNA(n) + a ribonucleoside 5'-triphosphate = RNA(n+1) + diphosphate. Promotes RNA polymerase assembly. Latches the N- and C-terminal regions of the beta' subunit thereby facilitating its interaction with the beta and alpha subunits. The sequence is that of DNA-directed RNA polymerase subunit omega from Actinobacillus pleuropneumoniae serotype 3 (strain JL03).